A 119-amino-acid polypeptide reads, in one-letter code: Hydrogenase maturation factor HypA (119 aa).

His2 provides a ligand contact to Ni(2+). Zn(2+) contacts are provided by Cys73, Cys76, Cys90, and Cys93.

Belongs to the HypA/HybF family.

Functionally, involved in the maturation of [NiFe] hydrogenases. Required for nickel insertion into the metal center of the hydrogenase. The chain is Hydrogenase maturation factor HypA from Wolinella succinogenes (strain ATCC 29543 / DSM 1740 / CCUG 13145 / JCM 31913 / LMG 7466 / NCTC 11488 / FDC 602W) (Vibrio succinogenes).